Consider the following 418-residue polypeptide: Phosphoglycerate kinase (418 aa).

Residues 18-20, R34, 57-60, R115, and R171 each bind substrate; these read DFN and HLGR. ATP is bound by residues K224, G315, E346, and 375 to 378; that span reads GGDS.

It belongs to the phosphoglycerate kinase family. Monomer.

It is found in the cytoplasm. The catalysed reaction is (2R)-3-phosphoglycerate + ATP = (2R)-3-phospho-glyceroyl phosphate + ADP. It functions in the pathway carbohydrate degradation; glycolysis; pyruvate from D-glyceraldehyde 3-phosphate: step 2/5. The polypeptide is Phosphoglycerate kinase (Porphyromonas gingivalis (strain ATCC BAA-308 / W83)).